Reading from the N-terminus, the 309-residue chain is Olfactory receptor 5H2 (309 aa).

Topologically, residues 1-28 (MEQDNTTLLTEFVLTGLTYQPEWKMPLF) are extracellular. Asn5 is a glycosylation site (N-linked (GlcNAc...) asparagine). Residues 29–49 (LVFLVIYLITIVWNLGLIALI) traverse the membrane as a helical segment. The Cytoplasmic segment spans residues 50–56 (WNDPQLH). A helical transmembrane segment spans residues 57–77 (IPMYFFLGSLAFVDAWISSTV). Residues 78-97 (TPKMLVNFLAKNRMISLSEC) lie on the Extracellular side of the membrane. Cys97 and Cys179 form a disulfide bridge. A helical transmembrane segment spans residues 98–118 (MIQFFSFAFGGTTECFLLATM). Topologically, residues 119 to 143 (AYDRYVAICKPLLYPVIMNNSLCIR) are cytoplasmic. The helical transmembrane segment at 144 to 164 (LLAFSFLGGFLHALIHEVLIF) threads the bilayer. Residues 165-193 (RLTFCNSNIIHHFYCDIIPLFMISCTDPS) lie on the Extracellular side of the membrane. The helical transmembrane segment at 194–214 (INFLMVFILSGSIQVFTIVTV) threads the bilayer. Residues 215–239 (LNSYTFALFTILKKKSVRGVRKAFS) lie on the Cytoplasmic side of the membrane. The chain crosses the membrane as a helical span at residues 240-260 (TCGAHLLSVSLYYGPLIFMYL). At 261–271 (RPASPQADDQD) the chain is on the extracellular side. The chain crosses the membrane as a helical span at residues 272-292 (MIDSVFYTIIIPLLNPIIYSL). The Cytoplasmic segment spans residues 293-309 (RNKQVIDSFTKMVKRNV).

This sequence belongs to the G-protein coupled receptor 1 family.

It is found in the cell membrane. In terms of biological role, odorant receptor. The protein is Olfactory receptor 5H2 (OR5H2) of Homo sapiens (Human).